A 188-amino-acid polypeptide reads, in one-letter code: Elongation factor P (188 aa).

Belongs to the elongation factor P family.

It is found in the cytoplasm. It participates in protein biosynthesis; polypeptide chain elongation. In terms of biological role, involved in peptide bond synthesis. Stimulates efficient translation and peptide-bond synthesis on native or reconstituted 70S ribosomes in vitro. Probably functions indirectly by altering the affinity of the ribosome for aminoacyl-tRNA, thus increasing their reactivity as acceptors for peptidyl transferase. This is Elongation factor P from Exiguobacterium sibiricum (strain DSM 17290 / CCUG 55495 / CIP 109462 / JCM 13490 / 255-15).